A 339-amino-acid chain; its full sequence is Putative pectinesterase 10 (339 aa).

Positions methionine 1–alanine 28 are cleaved as a signal peptide. N-linked (GlcNAc...) asparagine glycosylation is present at asparagine 112. Substrate is bound at residue threonine 116. The active-site Proton donor is the aspartate 169. The active-site Nucleophile is the aspartate 190. Residues arginine 252 and tryptophan 254 each contribute to the substrate site. A glycan (N-linked (GlcNAc...) asparagine) is linked at asparagine 322.

It belongs to the pectinesterase family. Expressed in siliques.

It is found in the secreted. It localises to the cell wall. The catalysed reaction is [(1-&gt;4)-alpha-D-galacturonosyl methyl ester](n) + n H2O = [(1-&gt;4)-alpha-D-galacturonosyl](n) + n methanol + n H(+). It participates in glycan metabolism; pectin degradation; 2-dehydro-3-deoxy-D-gluconate from pectin: step 1/5. Its function is as follows. Acts in the modification of cell walls via demethylesterification of cell wall pectin. The polypeptide is Putative pectinesterase 10 (PME10) (Arabidopsis thaliana (Mouse-ear cress)).